Consider the following 498-residue polypeptide: Transcription factor kayak (498 aa).

The segment covering 108-127 (ASLGQGSESEDSNASYNDTQ) has biased composition (polar residues). Disordered regions lie at residues 108-144 (ASLGQGSESEDSNASYNDTQMNEEQDTTDTSSAHTDS) and 177-234 (GSAS…KRRV). 2 stretches are compositionally biased toward low complexity: residues 135-144 (TDTSSAHTDS) and 177-191 (GSASVGSSNANTSNT). The 64-residue stretch at 212–275 (EQKRAVRRER…KQLEYLLATH (64 aa)) folds into the bZIP domain. Residues 214-233 (KRAVRRERNKQAAARCRKRR) are basic motif. Residues 240–247 (LTEEVEQL) form a leucine-zipper region. A compositionally biased stretch (low complexity) spans 304–325 (AGSSGSGASSHHNHNSNDSSNG). Disordered stretches follow at residues 304 to 345 (AGSS…SPLD) and 465 to 498 (TPVSGPLVPNSSSTNKHPLELPTPTAEPSKLVSL). Positions 333-343 (TLNSTGRSNSP) are enriched in polar residues. A Phosphoserine modification is found at S342.

The protein belongs to the bZIP family. Fos subfamily. Homodimer. Heterodimer with Jra. The kay-Jra heterodimer binds more stably to the AP-1 site than either of the two proteins alone.

Its subcellular location is the nucleus. Its function is as follows. Developmentally regulated transcription factor AP-1 binds and recognizes the enhancer DNA sequence: 5'-TGA[CG]TCA-3'. May play a role in the function or determination of a particular subset of cells in the developing embryo. It is able to carry out its function either independently of or in conjunction with Jra. This chain is Transcription factor kayak, found in Drosophila simulans (Fruit fly).